Consider the following 516-residue polypeptide: tRNA-guanine(15) transglycosylase (516 aa).

Aspartate 93 serves as the catalytic Nucleophile. Residues aspartate 128 and alanine 196 each coordinate substrate. 3 residues coordinate Zn(2+): cysteine 279, cysteine 281, and cysteine 284. Residues 488–502 (LSAVSERLGDEASVG) show a composition bias toward low complexity. Positions 488–516 (LSAVSERLGDEASVGGDDGDDGGSASSAE) are disordered.

The protein belongs to the archaeosine tRNA-ribosyltransferase family. Zn(2+) is required as a cofactor.

It carries out the reaction guanosine(15) in tRNA + 7-cyano-7-deazaguanine = 7-cyano-7-carbaguanosine(15) in tRNA + guanine. It participates in tRNA modification; archaeosine-tRNA biosynthesis. Its function is as follows. Exchanges the guanine residue with 7-cyano-7-deazaguanine (preQ0) at position 15 in the dihydrouridine loop (D-loop) of archaeal tRNAs. The sequence is that of tRNA-guanine(15) transglycosylase from Haloferax volcanii (strain ATCC 29605 / DSM 3757 / JCM 8879 / NBRC 14742 / NCIMB 2012 / VKM B-1768 / DS2) (Halobacterium volcanii).